Consider the following 295-residue polypeptide: Aspartate carbamoyltransferase catalytic subunit (295 aa).

Residues arginine 49 and threonine 50 each coordinate carbamoyl phosphate. Residue lysine 77 coordinates L-aspartate. Carbamoyl phosphate contacts are provided by arginine 99, histidine 127, and glutamine 130. 2 residues coordinate L-aspartate: arginine 161 and arginine 212. 2 residues coordinate carbamoyl phosphate: glycine 251 and proline 252.

The protein belongs to the aspartate/ornithine carbamoyltransferase superfamily. ATCase family. As to quaternary structure, heterododecamer (2C3:3R2) of six catalytic PyrB chains organized as two trimers (C3), and six regulatory PyrI chains organized as three dimers (R2).

The catalysed reaction is carbamoyl phosphate + L-aspartate = N-carbamoyl-L-aspartate + phosphate + H(+). Its pathway is pyrimidine metabolism; UMP biosynthesis via de novo pathway; (S)-dihydroorotate from bicarbonate: step 2/3. In terms of biological role, catalyzes the condensation of carbamoyl phosphate and aspartate to form carbamoyl aspartate and inorganic phosphate, the committed step in the de novo pyrimidine nucleotide biosynthesis pathway. This Aliarcobacter butzleri (strain RM4018) (Arcobacter butzleri) protein is Aspartate carbamoyltransferase catalytic subunit.